The chain runs to 276 residues: Insulin-like growth factor-binding protein 2-A (276 aa).

The N-terminal stretch at Met-1–Ser-22 is a signal peptide. The 82-residue stretch at Met-24 to Lys-105 folds into the IGFBP N-terminal domain. 9 cysteine pairs are disulfide-bonded: Cys-28–Cys-55, Cys-31–Cys-57, Cys-39–Cys-58, Cys-46–Cys-61, Cys-69–Cys-82, Cys-76–Cys-102, Cys-180–Cys-214, Cys-225–Cys-236, and Cys-238–Cys-259. The region spanning Gln-177–Cys-259 is the Thyroglobulin type-1 domain. The Cell attachment site signature appears at Arg-254–Asp-256.

As to quaternary structure, interacts equally well with igf1 and igf2. In terms of tissue distribution, in embryos at 24 hpf, initially expressed in the lens and cranial region, and at 48 and 72 hpf in the brain boundary vasculature. Expression in these regions persists throughout the hatching period and by 96 hpf expression is most abundant in the liver. In both male and female adults, highest expression is in the liver with modest expression in the brain. In male but not females adults, expressed at a low level in muscle and gonad. Also expressed in the adult intestine.

The protein resides in the secreted. In terms of biological role, IGF-binding proteins prolong the half-life of the IGFs and have been shown to either inhibit or stimulate the growth promoting effects of the IGFs on cell culture. They alter the interaction of IGFs with their cell surface receptors. This chain is Insulin-like growth factor-binding protein 2-A (igfbp2a), found in Danio rerio (Zebrafish).